The following is a 244-amino-acid chain: 5-oxoprolinase subunit A (244 aa).

It belongs to the LamB/PxpA family. In terms of assembly, forms a complex composed of PxpA, PxpB and PxpC.

It catalyses the reaction 5-oxo-L-proline + ATP + 2 H2O = L-glutamate + ADP + phosphate + H(+). In terms of biological role, catalyzes the cleavage of 5-oxoproline to form L-glutamate coupled to the hydrolysis of ATP to ADP and inorganic phosphate. The protein is 5-oxoprolinase subunit A of Escherichia coli O139:H28 (strain E24377A / ETEC).